A 101-amino-acid polypeptide reads, in one-letter code: Small ribosomal subunit protein uS14 (101 aa).

Belongs to the universal ribosomal protein uS14 family. Part of the 30S ribosomal subunit. Contacts proteins S3 and S10.

Binds 16S rRNA, required for the assembly of 30S particles and may also be responsible for determining the conformation of the 16S rRNA at the A site. The chain is Small ribosomal subunit protein uS14 from Erythrobacter litoralis (strain HTCC2594).